The primary structure comprises 202 residues: dITP/XTP pyrophosphatase (202 aa).

A substrate-binding site is contributed by 8-13 (TKNMGK). Mg(2+) is bound by residues Glu41 and Asp70. Catalysis depends on Asp70, which acts as the Proton acceptor. Substrate contacts are provided by residues Ser71, 155–158 (FGYD), Lys178, and 183–184 (HR).

It belongs to the HAM1 NTPase family. Homodimer. Mg(2+) is required as a cofactor.

The catalysed reaction is XTP + H2O = XMP + diphosphate + H(+). The enzyme catalyses dITP + H2O = dIMP + diphosphate + H(+). It carries out the reaction ITP + H2O = IMP + diphosphate + H(+). Pyrophosphatase that catalyzes the hydrolysis of nucleoside triphosphates to their monophosphate derivatives, with a high preference for the non-canonical purine nucleotides XTP (xanthosine triphosphate), dITP (deoxyinosine triphosphate) and ITP. Seems to function as a house-cleaning enzyme that removes non-canonical purine nucleotides from the nucleotide pool, thus preventing their incorporation into DNA/RNA and avoiding chromosomal lesions. The sequence is that of dITP/XTP pyrophosphatase from Bacillus anthracis.